Reading from the N-terminus, the 689-residue chain is Glycine--tRNA ligase beta subunit (689 aa).

This sequence belongs to the class-II aminoacyl-tRNA synthetase family. Tetramer of two alpha and two beta subunits.

Its subcellular location is the cytoplasm. It catalyses the reaction tRNA(Gly) + glycine + ATP = glycyl-tRNA(Gly) + AMP + diphosphate. The chain is Glycine--tRNA ligase beta subunit from Lacticaseibacillus paracasei (strain ATCC 334 / BCRC 17002 / CCUG 31169 / CIP 107868 / KCTC 3260 / NRRL B-441) (Lactobacillus paracasei).